The sequence spans 81 residues: MEKIVFRKIVFVAFLLSLSCLLEGEARMSGDVTIQRGGSCNNDNTCHDTCPGCRITQCIFRQCVCTRCNTPRSSLRIESHM.

The signal sequence occupies residues 1 to 26; it reads MEKIVFRKIVFVAFLLSLSCLLEGEA. Intrachain disulfides connect Cys40–Cys58, Cys46–Cys63, and Cys50–Cys65.

It belongs to the DEFL family.

The protein localises to the secreted. This chain is Defensin-like protein 266, found in Arabidopsis thaliana (Mouse-ear cress).